The chain runs to 279 residues: Tryptophan synthase alpha chain (279 aa).

Catalysis depends on proton acceptor residues glutamate 50 and aspartate 61.

The protein belongs to the TrpA family. As to quaternary structure, tetramer of two alpha and two beta chains.

It carries out the reaction (1S,2R)-1-C-(indol-3-yl)glycerol 3-phosphate + L-serine = D-glyceraldehyde 3-phosphate + L-tryptophan + H2O. The protein operates within amino-acid biosynthesis; L-tryptophan biosynthesis; L-tryptophan from chorismate: step 5/5. Its function is as follows. The alpha subunit is responsible for the aldol cleavage of indoleglycerol phosphate to indole and glyceraldehyde 3-phosphate. The sequence is that of Tryptophan synthase alpha chain from Sinorhizobium fredii (strain NBRC 101917 / NGR234).